The primary structure comprises 436 residues: ATP-dependent protease ATPase subunit HslU (436 aa).

Residues Ile19, 61-65, Asp249, Glu314, and Arg386 each bind ATP; that span reads GVGKT.

Belongs to the ClpX chaperone family. HslU subfamily. As to quaternary structure, a double ring-shaped homohexamer of HslV is capped on each side by a ring-shaped HslU homohexamer. The assembly of the HslU/HslV complex is dependent on binding of ATP.

It is found in the cytoplasm. Its function is as follows. ATPase subunit of a proteasome-like degradation complex; this subunit has chaperone activity. The binding of ATP and its subsequent hydrolysis by HslU are essential for unfolding of protein substrates subsequently hydrolyzed by HslV. HslU recognizes the N-terminal part of its protein substrates and unfolds these before they are guided to HslV for hydrolysis. The chain is ATP-dependent protease ATPase subunit HslU from Bartonella henselae (strain ATCC 49882 / DSM 28221 / CCUG 30454 / Houston 1) (Rochalimaea henselae).